A 561-amino-acid polypeptide reads, in one-letter code: MMQGDVSPNPSLIDRTIKMRKETETRKVVLAWGLLNVSMAGMIYTEMTGKLISTYYNVTYWPLWYIELALASLFSLNALFDFWRYFKYTVAPTSLVVSPGQQALLGLKQAVVQTTPPRDLAATQISPSPPSPSIQGQSVLSYSPSRSPSTSPKFATSCMTGYSPQLQGLSSGGLGSYSPGVTYSPVSGYNKLASFSLSPSSPYPTTVGPVESSGLRARYRSPPTVYNSPTDKEDYMTDLRTLDTFLRSEEEKQHRVKLGSPDSTSPSTSPTFWNYSRSVGDYAQTLKKFQYQLACRSQAPCANKDEADLISKQAAEEVWARVTMNRQLLDHMDSWTAKFRNWISETILVPLVQEIESVSTQMRRMGCPELQIGEASVTSLKQAALVRAPLIPTLNAIVQYLDLTPNQEYLFERIKELSQGGCMSSFRWNRGGDFKGRKWDTDLPTDSAIIMHVFCTYLDSRLPPHPKYPDGKTFTSQHFVQTPNKPDVTNENVFCIYQSAVNPPHYELIYQRHVYNLPKGRNNMFHTLLMFLYIIKTKESGMLGRVNLGLSGVNILWIFGE.

S11 bears the Phosphoserine mark. The chain crosses the membrane as a helical span at residues 28 to 48 (VVLAWGLLNVSMAGMIYTEMT). N57 carries an N-linked (GlcNAc...) asparagine glycan. Residues 60–80 (YWPLWYIELALASLFSLNALF) form a helical membrane-spanning segment. S98 carries the post-translational modification Phosphoserine. Disordered stretches follow at residues 120 to 156 (LAAT…KFAT) and 200 to 232 (SSPY…PTDK). Residues 138–152 (SVLSYSPSRSPSTSP) show a composition bias toward low complexity. 2 positions are modified to phosphoserine: S201 and S248. The tract at residues 250-270 (EEKQHRVKLGSPDSTSPSTSP) is disordered. Residues 260-270 (SPDSTSPSTSP) are compositionally biased toward low complexity. N-linked (GlcNAc...) asparagine glycosylation occurs at N274. S278 is subject to Phosphoserine.

As to quaternary structure, interacts with NUP205.

Its subcellular location is the membrane. The protein resides in the nucleus envelope. The protein localises to the golgi apparatus. It is found in the cytoplasm. Functionally, nuclear envelope protein which in association with NUP205, may be involved in nuclear transport of various nuclear proteins in addition to MYC. This Mus musculus (Mouse) protein is Transmembrane protein 209 (Tmem209).